Consider the following 196-residue polypeptide: Molybdenum cofactor guanylyltransferase (196 aa).

GTP contacts are provided by residues 10–12 (LAG), lysine 23, asparagine 51, aspartate 69, and aspartate 99. Aspartate 99 contacts Mg(2+).

Belongs to the MobA family. Monomer. Mg(2+) serves as cofactor.

The protein localises to the cytoplasm. The catalysed reaction is Mo-molybdopterin + GTP + H(+) = Mo-molybdopterin guanine dinucleotide + diphosphate. Transfers a GMP moiety from GTP to Mo-molybdopterin (Mo-MPT) cofactor (Moco or molybdenum cofactor) to form Mo-molybdopterin guanine dinucleotide (Mo-MGD) cofactor. The chain is Molybdenum cofactor guanylyltransferase from Shewanella sediminis (strain HAW-EB3).